A 336-amino-acid polypeptide reads, in one-letter code: Putative transcription factor avaE (336 aa).

Residues 32–100 constitute a DNA-binding region (WRKY); sequence TATRLNQTTF…VPLDQNESMP (69 aa).

Its subcellular location is the nucleus. It functions in the pathway secondary metabolite biosynthesis. Functionally, putative transcription factor; part of the cluster that mediates the biosynthesis of a highly modified cyclo-arginine-tryptophan dipeptide (cRW). The polypeptide is Putative transcription factor avaE (Aspergillus versicolor).